A 209-amino-acid chain; its full sequence is Uracil phosphoribosyltransferase (209 aa).

5-phospho-alpha-D-ribose 1-diphosphate contacts are provided by residues arginine 79, arginine 104, and 131 to 139; that span reads DPMLATGGS. Uracil-binding positions include isoleucine 194 and 199–201; that span reads GDA. Residue aspartate 200 participates in 5-phospho-alpha-D-ribose 1-diphosphate binding.

It belongs to the UPRTase family. It depends on Mg(2+) as a cofactor.

It carries out the reaction UMP + diphosphate = 5-phospho-alpha-D-ribose 1-diphosphate + uracil. It participates in pyrimidine metabolism; UMP biosynthesis via salvage pathway; UMP from uracil: step 1/1. Its activity is regulated as follows. Allosterically activated by GTP. Functionally, catalyzes the conversion of uracil and 5-phospho-alpha-D-ribose 1-diphosphate (PRPP) to UMP and diphosphate. The polypeptide is Uracil phosphoribosyltransferase (Alkaliphilus oremlandii (strain OhILAs) (Clostridium oremlandii (strain OhILAs))).